Reading from the N-terminus, the 259-residue chain is Submandibular glandular kallikrein-9 (259 aa).

The N-terminal stretch at Met1–Ala18 is a signal peptide. Residues Pro19 to Arg24 constitute a propeptide, activation peptide. One can recognise a Peptidase S1 domain in the interval Val25–Lys256. Intrachain disulfides connect Cys31/Cys171, Cys48/Cys64, Cys150/Cys217, Cys182/Cys196, and Cys207/Cys232. The active-site Charge relay system is the His63. The N-linked (GlcNAc...) asparagine glycan is linked to Asn106. Residue Asp118 is the Charge relay system of the active site. Ser211 functions as the Charge relay system in the catalytic mechanism.

It belongs to the peptidase S1 family. Kallikrein subfamily. In terms of assembly, heterodimer of a light chain and heavy chain linked by a disulfide bond.

The enzyme catalyses Preferential cleavage of Arg-|-Xaa bonds in small molecule substrates. Highly selective action to release kallidin (lysyl-bradykinin) from kininogen involves hydrolysis of Met-|-Xaa or Leu-|-Xaa.. Glandular kallikreins cleave Met-Lys and Arg-Ser bonds in kininogen to release Lys-bradykinin. This enzyme has a vasoconstrictor activity. KLK-9 has both a chymotrypsin-like and a trypsin-like properties. This is Submandibular glandular kallikrein-9 (Klk9) from Rattus norvegicus (Rat).